Reading from the N-terminus, the 21-residue chain is Bradykinin-potentiating peptide K12 (21 aa).

The disordered stretch occupies residues 1–21 (LRDYANRVINGGPVEAAGPPA).

Expressed by the venom gland.

It is found in the secreted. Its function is as follows. Inhibits angiotensin-converting enzyme (ACE), but does not serve as substrate for the enzyme. Potentiate bradykinin (BK) on the isolated guinea pig ileum as well as the isolated rat uterus for contraction. Also potentiates in vivo the depressor effect of BK on arterial blood pressure in the normotensive anesthetized rat. Intracerebroventricular injection into mice does not show toxic activity. The protein is Bradykinin-potentiating peptide K12 of Buthus occitanus (Common European scorpion).